We begin with the raw amino-acid sequence, 147 residues long: Transthyretin (147 aa).

The signal sequence occupies residues 1–20 (MASHRLLLLCLAGLVFVSEA). C30 is modified (sulfocysteine). Residue K35 coordinates L-thyroxine. A 4-carboxyglutamate modification is found at E62. Position 72 is a phosphoserine (S72). Residue E74 coordinates L-thyroxine. The N-linked (GlcNAc...) asparagine glycan is linked to N118. S137 is a binding site for L-thyroxine.

This sequence belongs to the transthyretin family. In terms of assembly, homotetramer. Dimer of dimers. In the homotetramer, subunits assemble around a central channel that can accommodate two ligand molecules. Interacts with RBP4. Post-translationally, sulfonation of the reactive cysteine Cys-30 enhances the stability of the native conformation of TTR, avoiding misassembly of the protein leading to amyloid formation. In terms of tissue distribution, detected in brain.

Its subcellular location is the secreted. Its function is as follows. Thyroid hormone-binding protein. Probably transports thyroxine from the bloodstream to the brain. The sequence is that of Transthyretin (TTR) from Pan troglodytes (Chimpanzee).